Reading from the N-terminus, the 170-residue chain is Putative beta-eliminating lyase-like protein (170 aa).

The residue at position 32 (Lys-32) is an N6-(pyridoxal phosphate)lysine.

The protein belongs to the beta-eliminating lyase family. Requires pyridoxal 5'-phosphate as cofactor.

This chain is Putative beta-eliminating lyase-like protein, found in Dictyostelium discoideum (Social amoeba).